Here is a 369-residue protein sequence, read N- to C-terminus: UDP-N-acetylglucosamine--N-acetylmuramyl-(pentapeptide) pyrophosphoryl-undecaprenol N-acetylglucosamine transferase (369 aa).

UDP-N-acetyl-alpha-D-glucosamine contacts are provided by residues 16-18 (TGG), Asn-130, Arg-171, Ser-196, and Gln-297.

This sequence belongs to the glycosyltransferase 28 family. MurG subfamily.

The protein resides in the cell inner membrane. The catalysed reaction is di-trans,octa-cis-undecaprenyl diphospho-N-acetyl-alpha-D-muramoyl-L-alanyl-D-glutamyl-meso-2,6-diaminopimeloyl-D-alanyl-D-alanine + UDP-N-acetyl-alpha-D-glucosamine = di-trans,octa-cis-undecaprenyl diphospho-[N-acetyl-alpha-D-glucosaminyl-(1-&gt;4)]-N-acetyl-alpha-D-muramoyl-L-alanyl-D-glutamyl-meso-2,6-diaminopimeloyl-D-alanyl-D-alanine + UDP + H(+). It functions in the pathway cell wall biogenesis; peptidoglycan biosynthesis. Functionally, cell wall formation. Catalyzes the transfer of a GlcNAc subunit on undecaprenyl-pyrophosphoryl-MurNAc-pentapeptide (lipid intermediate I) to form undecaprenyl-pyrophosphoryl-MurNAc-(pentapeptide)GlcNAc (lipid intermediate II). The protein is UDP-N-acetylglucosamine--N-acetylmuramyl-(pentapeptide) pyrophosphoryl-undecaprenol N-acetylglucosamine transferase of Desulfotalea psychrophila (strain LSv54 / DSM 12343).